Reading from the N-terminus, the 99-residue chain is Large ribosomal subunit protein uL23 (99 aa).

The protein belongs to the universal ribosomal protein uL23 family. In terms of assembly, part of the 50S ribosomal subunit. Contacts protein L29, and trigger factor when it is bound to the ribosome.

Its function is as follows. One of the early assembly proteins it binds 23S rRNA. One of the proteins that surrounds the polypeptide exit tunnel on the outside of the ribosome. Forms the main docking site for trigger factor binding to the ribosome. In Agathobacter rectalis (strain ATCC 33656 / DSM 3377 / JCM 17463 / KCTC 5835 / VPI 0990) (Eubacterium rectale), this protein is Large ribosomal subunit protein uL23.